Reading from the N-terminus, the 218-residue chain is ATP phosphoribosyltransferase (218 aa).

The protein belongs to the ATP phosphoribosyltransferase family. Short subfamily. As to quaternary structure, heteromultimer composed of HisG and HisZ subunits.

Its subcellular location is the cytoplasm. The catalysed reaction is 1-(5-phospho-beta-D-ribosyl)-ATP + diphosphate = 5-phospho-alpha-D-ribose 1-diphosphate + ATP. The protein operates within amino-acid biosynthesis; L-histidine biosynthesis; L-histidine from 5-phospho-alpha-D-ribose 1-diphosphate: step 1/9. Functionally, catalyzes the condensation of ATP and 5-phosphoribose 1-diphosphate to form N'-(5'-phosphoribosyl)-ATP (PR-ATP). Has a crucial role in the pathway because the rate of histidine biosynthesis seems to be controlled primarily by regulation of HisG enzymatic activity. This is ATP phosphoribosyltransferase from Burkholderia mallei (strain ATCC 23344).